The sequence spans 382 residues: Adaptive-response sensory kinase SasA (382 aa).

Residues 160-382 (MLAHDLRSPL…CFHFTLPVYR (223 aa)) form the Histidine kinase domain. A Phosphohistidine; by autocatalysis modification is found at His-163.

Homooligomerizes. Interacts with KaiC. Participates in the KaiABC clock complex, whose core is composed of a KaiC homohexamer, 6 KaiB and up to 6 KaiA dimers. SasA and KaiB(fs) compete to bind to KaiC.

The catalysed reaction is ATP + protein L-histidine = ADP + protein N-phospho-L-histidine.. Functionally, member of the two-component regulatory system SasA/RpaA involved in genome-wide circadian gene expression. One of several clock output pathways. Participates in the Kai clock protein complex, the main circadian regulator in cyanobacteria, via its interaction with KaiC. KaiC enhances the autophosphorylation activity of SasA, which then transfers its phosphate group to RpaA to activate it. In addition to its output function, recruits fold-shifted KaiB (KaiB(fs)) to KaiC to cooperatively form the KaiB(6):KaiC(6) complex (independent of SasA kinase activity). Required for robustness of the circadian rhythm of gene expression and is involved in clock output, also required for adaptation to light/dark cycles. This is Adaptive-response sensory kinase SasA from Crocosphaera subtropica (strain ATCC 51142 / BH68) (Cyanothece sp. (strain ATCC 51142)).